A 292-amino-acid chain; its full sequence is Large ribosomal subunit protein uL4 (292 aa).

Basic and acidic residues-rich tracts occupy residues 1–33 (MVEVKKTTKTKSTEEKAPKITKATKEKTSDKTA) and 42–51 (KVSDKAESTP). Disordered stretches follow at residues 1–59 (MVEV…VKTS) and 132–158 (GTHKVKNRAEVSGTGKKPWKQKGTGKA).

This sequence belongs to the universal ribosomal protein uL4 family. Part of the 50S ribosomal subunit.

Functionally, one of the primary rRNA binding proteins, this protein initially binds near the 5'-end of the 23S rRNA. It is important during the early stages of 50S assembly. It makes multiple contacts with different domains of the 23S rRNA in the assembled 50S subunit and ribosome. Its function is as follows. Forms part of the polypeptide exit tunnel. In Mycoplasmopsis pulmonis (strain UAB CTIP) (Mycoplasma pulmonis), this protein is Large ribosomal subunit protein uL4.